Reading from the N-terminus, the 108-residue chain is Small ribosomal subunit protein bS18c (108 aa).

2 stretches are compositionally biased toward basic residues: residues 1–19 (MDKSKRTFRKSKRSFRRRL) and 97–108 (RARKKKIGLLLN). Disordered stretches follow at residues 1–23 (MDKSKRTFRKSKRSFRRRLPPIG) and 83–108 (QFERTESTPRTTGTRARKKKIGLLLN).

The protein belongs to the bacterial ribosomal protein bS18 family. As to quaternary structure, part of the 30S ribosomal subunit.

The protein resides in the plastid. Its subcellular location is the chloroplast. This Illicium oligandrum (Star anise) protein is Small ribosomal subunit protein bS18c.